The following is a 163-amino-acid chain: Small ribosomal subunit protein uS5 (163 aa).

An S5 DRBM domain is found at 8–71 (LIEKIVYLNR…EKARKEMISV (64 aa)).

It belongs to the universal ribosomal protein uS5 family. In terms of assembly, part of the 30S ribosomal subunit. Contacts proteins S4 and S8.

With S4 and S12 plays an important role in translational accuracy. Its function is as follows. Located at the back of the 30S subunit body where it stabilizes the conformation of the head with respect to the body. The sequence is that of Small ribosomal subunit protein uS5 from Maridesulfovibrio salexigens (strain ATCC 14822 / DSM 2638 / NCIMB 8403 / VKM B-1763) (Desulfovibrio salexigens).